The primary structure comprises 90 residues: Photosystem I reaction center subunit PsaK 2 (90 aa).

2 consecutive transmembrane segments (helical) span residues Leu20–Gln42 and Leu67–Ile89.

It belongs to the PsaG/PsaK family.

It is found in the cellular thylakoid membrane. This chain is Photosystem I reaction center subunit PsaK 2 (psaK2), found in Synechocystis sp. (strain ATCC 27184 / PCC 6803 / Kazusa).